The chain runs to 152 residues: Psoriasis susceptibility 1 candidate gene 1 protein homolog (152 aa).

Residues 1-31 (MTCTDQKSHSQRALGTQTPALQGPQLLNTDP) show a composition bias toward polar residues. Disordered regions lie at residues 1–39 (MTCT…TRPP) and 132–152 (APTL…SSLI).

In Pan troglodytes (Chimpanzee), this protein is Psoriasis susceptibility 1 candidate gene 1 protein homolog (PSORS1C1).